A 218-amino-acid chain; its full sequence is Acetyl- and succinyl-CoA transferase MT0822 (218 aa).

The region spanning 32–188 (DTILEGVHDP…EALLFRLTRD (157 aa)) is the N-acetyltransferase domain. Substrate contacts are provided by residues glutamine 94, 109 to 113 (SGSWL), 119 to 124 (GHGYGT), 145 to 151 (SRSFVDN), and arginine 160.

In terms of assembly, dimer of dimers.

The catalysed reaction is L-lysyl-[protein] + acetyl-CoA = N(6)-acetyl-L-lysyl-[protein] + CoA + H(+). The enzyme catalyses succinyl-CoA + L-lysyl-[protein] = N(6)-succinyl-L-lysyl-[protein] + CoA + H(+). Functionally, acetylates and succinylates nucleoid-associated, DNA-binding protein HupB. In Mycobacterium tuberculosis (strain CDC 1551 / Oshkosh), this protein is Acetyl- and succinyl-CoA transferase MT0822.